Here is a 389-residue protein sequence, read N- to C-terminus: MNNIVHKLKTLVLNEAFGGVLLIVCTLLALLVQNGSFSEHYREFLNLKVGFSVGEFELNKPFLLWINDGLISIFFFAIGLELKKEFLHGDFKNPKNIVLPFMAALGGILIPAMLFALVNIGDAYTLKGWAIPTATDTAFALAILMMCGKHIPSSLKIFLLSLAIFDDVGAILIIAIFYTTKLSIVAFVVAGLAILAMLILNLLGITRKSFYFICSVILWISVLKSGVHATLAGIVTAFFIPMQTKNGEAFLEEIYESLKFWIAFIILPLFAFANAGVNLSNIDIGAIFSGVSIGIFLGLFVGKQVGVFLFSYLAIRFKFAALPQGSNLKQLYGVCILTGIGFTMSLFIDGLAYEVSDIFNYADNLAILIASFCSGIWGFIYLKFFTTRS.

Transmembrane regions (helical) follow at residues 12-32, 62-82, 97-117, 128-148, 157-177, 184-204, 220-240, 260-280, 282-302, 331-351, and 365-385; these read VLNEAFGGVLLIVCTLLALLV, FLLWINDGLISIFFFAIGLEL, IVLPFMAALGGILIPAMLFAL, GWAIPTATDTAFALAILMMCG, IFLLSLAIFDDVGAILIIAIF, IVAFVVAGLAILAMLILNLLG, ISVLKSGVHATLAGIVTAFFI, FWIAFIILPLFAFANAGVNLS, IDIGAIFSGVSIGIFLGLFVG, LYGVCILTGIGFTMSLFIDGL, and LAILIASFCSGIWGFIYLKFF.

The protein belongs to the NhaA Na(+)/H(+) (TC 2.A.33) antiporter family.

It is found in the cell inner membrane. It carries out the reaction Na(+)(in) + 2 H(+)(out) = Na(+)(out) + 2 H(+)(in). Functionally, na(+)/H(+) antiporter that extrudes sodium in exchange for external protons. The polypeptide is Na(+)/H(+) antiporter NhaA 1 (Campylobacter jejuni (strain RM1221)).